Consider the following 557-residue polypeptide: Protein NRT1/ PTR FAMILY 5.14 (557 aa).

A run of 2 helical transmembrane segments spans residues 35-55 (AALFIIGVEVAERFAYYGIGS) and 78-98 (AWSGIATLLPVLGAFVADAFL). Phosphothreonine is present on Thr-103. 10 consecutive transmembrane segments (helical) span residues 104 to 124 (IIISSLIYVLGLAFLTLSAFL), 133 to 153 (SSTSSFLNVLFFFSLYLVAIG), 183 to 203 (FFNWWYLSLSAGICFAILVVV), 209 to 229 (FSWAFGFGIPCVFMVISLVLF), 320 to 340 (IPVWFTTLAYAIPYAQYMTFF), 357 to 377 (IPPASLQVFIGISIVLFVPIY), 401 to 421 (IGTGIVLSTITMVIAALVEFK), 443 to 463 (IWWLIPQYLLLGLADVYTLVG), 479 to 499 (IGLALYLSALGVGSLLSSLLI), and 526 to 546 (YFYWLLAIVSAVGFFTFLFIS).

Belongs to the major facilitator superfamily. Proton-dependent oligopeptide transporter (POT/PTR) (TC 2.A.17) family. Expressed in roots.

The protein localises to the membrane. The protein is Protein NRT1/ PTR FAMILY 5.14 (NPF5.14) of Arabidopsis thaliana (Mouse-ear cress).